Consider the following 380-residue polypeptide: Tryptophan--tRNA ligase 2 (380 aa).

The 'HIGH' region signature appears at 74–82 (PSGPMHLGH). The short motif at 249–253 (KMSSS) is the 'KMSKS' region element.

Belongs to the class-I aminoacyl-tRNA synthetase family.

Its subcellular location is the cytoplasm. The enzyme catalyses tRNA(Trp) + L-tryptophan + ATP = L-tryptophyl-tRNA(Trp) + AMP + diphosphate + H(+). This chain is Tryptophan--tRNA ligase 2, found in Halobacterium salinarum (strain ATCC 700922 / JCM 11081 / NRC-1) (Halobacterium halobium).